Here is a 221-residue protein sequence, read N- to C-terminus: Small ribosomal subunit protein eS1 (221 aa).

Belongs to the eukaryotic ribosomal protein eS1 family.

The chain is Small ribosomal subunit protein eS1 from Pyrobaculum aerophilum (strain ATCC 51768 / DSM 7523 / JCM 9630 / CIP 104966 / NBRC 100827 / IM2).